The primary structure comprises 599 residues: Aspartate--tRNA ligase (599 aa).

E175 contributes to the L-aspartate binding site. Positions 199-202 (QQFK) are aspartate. Positions 221 and 446 each coordinate L-aspartate. 221 to 223 (RDE) serves as a coordination point for ATP. E480 contacts ATP. R487 contacts L-aspartate. 532–535 (GVDR) contributes to the ATP binding site.

This sequence belongs to the class-II aminoacyl-tRNA synthetase family. Type 1 subfamily. As to quaternary structure, homodimer.

It is found in the cytoplasm. The catalysed reaction is tRNA(Asp) + L-aspartate + ATP = L-aspartyl-tRNA(Asp) + AMP + diphosphate. In terms of biological role, catalyzes the attachment of L-aspartate to tRNA(Asp) in a two-step reaction: L-aspartate is first activated by ATP to form Asp-AMP and then transferred to the acceptor end of tRNA(Asp). In Streptomyces griseus subsp. griseus (strain JCM 4626 / CBS 651.72 / NBRC 13350 / KCC S-0626 / ISP 5235), this protein is Aspartate--tRNA ligase.